We begin with the raw amino-acid sequence, 638 residues long: Stress-activated protein kinase alpha (638 aa).

6 ANK repeats span residues 43 to 72 (YGQS…TLKA), 80 to 109 (NGFS…NVDV), 113 to 146 (DLNT…NVNA), 150 to 181 (NGET…NVNL), 185 to 214 (FQES…DVDC), and 219 to 248 (ERKT…LFDW). An SAM domain is found at 240–303 (KKYKDLFDWL…LKETSNLANE (64 aa)). A Protein kinase domain is found at 351–620 (LEYTEKLGAG…RLVTIENEYR (270 aa)). ATP is bound by residues 357–365 (LGAGSSGKV) and Lys378. The active-site Proton acceptor is the Asp472.

Belongs to the protein kinase superfamily. TKL Ser/Thr protein kinase family. As to quaternary structure, interacts with F-actin. Post-translationally, autophosphorylated.

The protein resides in the cytoplasm. Its subcellular location is the cytoskeleton. It catalyses the reaction L-seryl-[protein] + ATP = O-phospho-L-seryl-[protein] + ADP + H(+). It carries out the reaction L-threonyl-[protein] + ATP = O-phospho-L-threonyl-[protein] + ADP + H(+). In terms of biological role, may be involved in cortical F-actin organization and resistance to osmotic stress. Activated upon cell detachment, in vitro. The sequence is that of Stress-activated protein kinase alpha (spkA-1) from Dictyostelium discoideum (Social amoeba).